The sequence spans 155 residues: Small ribosomal subunit protein uS7 (155 aa).

Belongs to the universal ribosomal protein uS7 family. As to quaternary structure, part of the 30S ribosomal subunit. Contacts proteins S9 and S11.

Its function is as follows. One of the primary rRNA binding proteins, it binds directly to 16S rRNA where it nucleates assembly of the head domain of the 30S subunit. Is located at the subunit interface close to the decoding center, probably blocks exit of the E-site tRNA. The polypeptide is Small ribosomal subunit protein uS7 (Xylella fastidiosa (strain M12)).